The primary structure comprises 210 residues: Peptidyl-tRNA hydrolase (210 aa).

Position 14 (tyrosine 14) interacts with tRNA. Histidine 19 serves as the catalytic Proton acceptor. Positions 64, 66, and 112 each coordinate tRNA.

The protein belongs to the PTH family. Monomer.

It is found in the cytoplasm. The catalysed reaction is an N-acyl-L-alpha-aminoacyl-tRNA + H2O = an N-acyl-L-amino acid + a tRNA + H(+). Functionally, hydrolyzes ribosome-free peptidyl-tRNAs (with 1 or more amino acids incorporated), which drop off the ribosome during protein synthesis, or as a result of ribosome stalling. In terms of biological role, catalyzes the release of premature peptidyl moieties from peptidyl-tRNA molecules trapped in stalled 50S ribosomal subunits, and thus maintains levels of free tRNAs and 50S ribosomes. This is Peptidyl-tRNA hydrolase from Methylorubrum populi (strain ATCC BAA-705 / NCIMB 13946 / BJ001) (Methylobacterium populi).